A 231-amino-acid polypeptide reads, in one-letter code: uncharacterized protein (231 aa).

This is an uncharacterized protein from Methanocaldococcus jannaschii (strain ATCC 43067 / DSM 2661 / JAL-1 / JCM 10045 / NBRC 100440) (Methanococcus jannaschii).